Consider the following 459-residue polypeptide: ATP synthase subunit beta (459 aa).

148-155 serves as a coordination point for ATP; the sequence is GGAGVGKT.

This sequence belongs to the ATPase alpha/beta chains family. F-type ATPases have 2 components, CF(1) - the catalytic core - and CF(0) - the membrane proton channel. CF(1) has five subunits: alpha(3), beta(3), gamma(1), delta(1), epsilon(1). CF(0) has three main subunits: a(1), b(2) and c(9-12). The alpha and beta chains form an alternating ring which encloses part of the gamma chain. CF(1) is attached to CF(0) by a central stalk formed by the gamma and epsilon chains, while a peripheral stalk is formed by the delta and b chains.

The protein resides in the cell inner membrane. It catalyses the reaction ATP + H2O + 4 H(+)(in) = ADP + phosphate + 5 H(+)(out). Functionally, produces ATP from ADP in the presence of a proton gradient across the membrane. The catalytic sites are hosted primarily by the beta subunits. The polypeptide is ATP synthase subunit beta (Thioalkalivibrio sulfidiphilus (strain HL-EbGR7)).